The sequence spans 324 residues: Cyclin-dependent kinase 1 (324 aa).

In terms of domain architecture, Protein kinase spans 4–307; it reads YQKIEKIGEG…AKQACMHPYF (304 aa). ATP-binding positions include 10–18 and K34; that span reads IGEGTYGVV. T14 is subject to Phosphothreonine. The residue at position 15 (Y15) is a Phosphotyrosine. D148 functions as the Proton acceptor in the catalytic mechanism. T181 is modified (phosphothreonine; by CAK).

The protein belongs to the protein kinase superfamily. CMGC Ser/Thr protein kinase family. CDC2/CDKX subfamily. In terms of assembly, forms a stable but non-covalent complex with a regulatory subunit (SUC1) and with a cyclin.

The catalysed reaction is L-seryl-[protein] + ATP = O-phospho-L-seryl-[protein] + ADP + H(+). It catalyses the reaction L-threonyl-[protein] + ATP = O-phospho-L-threonyl-[protein] + ADP + H(+). Phosphorylation at Thr-14 or Tyr-15 inactivates the enzyme, while phosphorylation at Thr-181 activates it. In terms of biological role, cyclin-dependent kinase that acts as a master regulator of the mitotic and meiotic cell cycles. This Ajellomyces capsulatus (Darling's disease fungus) protein is Cyclin-dependent kinase 1.